We begin with the raw amino-acid sequence, 215 residues long: Adenylate kinase (215 aa).

10–15 (GAGKGT) is a binding site for ATP. An NMP region spans residues 30–59 (STGDILRANVRDGTKLGKEAKGYMDKGELV). Residues T31, R36, 57 to 59 (ELV), 85 to 88 (GYPR), and Q92 each bind AMP. Residues 126 to 162 (GRYVCTCGESYHMKFNPPKKENVCDACGADLYQRDDD) form an LID region. Residue R127 coordinates ATP. Residues C130 and C132 each contribute to the Zn(2+) site. 135-136 (SY) is an ATP binding site. Positions 149 and 152 each coordinate Zn(2+). The AMP site is built by R159 and R170. Position 198 (G198) interacts with ATP.

Belongs to the adenylate kinase family. As to quaternary structure, monomer.

It localises to the cytoplasm. The catalysed reaction is AMP + ATP = 2 ADP. It functions in the pathway purine metabolism; AMP biosynthesis via salvage pathway; AMP from ADP: step 1/1. Its function is as follows. Catalyzes the reversible transfer of the terminal phosphate group between ATP and AMP. Plays an important role in cellular energy homeostasis and in adenine nucleotide metabolism. The protein is Adenylate kinase of Methanococcoides burtonii (strain DSM 6242 / NBRC 107633 / OCM 468 / ACE-M).